The following is a 496-amino-acid chain: Cytochrome P450 3A56 (496 aa).

Cys441 contacts heme.

It belongs to the cytochrome P450 family. Requires heme as cofactor. In terms of tissue distribution, highly expressed in liver and intestine. Moderate expression in gill and spleen. Low expression in kidney, brain and heart.

Its subcellular location is the endoplasmic reticulum membrane. The protein resides in the microsome membrane. It catalyses the reaction an organic molecule + reduced [NADPH--hemoprotein reductase] + O2 = an alcohol + oxidized [NADPH--hemoprotein reductase] + H2O + H(+). Functionally, putative steroid 6-beta-hydroxylase. This is Cytochrome P450 3A56 (cyp3a56) from Fundulus heteroclitus (Killifish).